We begin with the raw amino-acid sequence, 555 residues long: Probable apyrase 6 (555 aa).

A compositionally biased stretch (basic residues) spans 1-10; the sequence is MRRSHARSRV. Positions 1 to 45 are disordered; the sequence is MRRSHARSRVKNSSSSKSDMDPIKFQIRSGNRAPSSSSTYTLTKP. Topologically, residues 1–55 are cytoplasmic; the sequence is MRRSHARSRVKNSSSSKSDMDPIKFQIRSGNRAPSSSSTYTLTKPNSKHAKSNLL. Positions 28-45 are enriched in polar residues; sequence RSGNRAPSSSSTYTLTKP. The chain crosses the membrane as a helical span at residues 56-76; sequence LTVGSISVVLGVLFLCYSILF. At 77 to 512 the chain is on the extracellular side; it reads SGGNLRGSLR…HALFSNHPKT (436 aa). 89 to 99 provides a ligand contact to ATP; the sequence is VVIDGGSTGTR. Residue E212 is the Proton acceptor of the active site. 236–246 serves as a coordination point for ATP; sequence GIVELGGASAQ. N267 and N348 each carry an N-linked (GlcNAc...) asparagine glycan. A helical transmembrane segment spans residues 513-533; the sequence is LHYLIGIPILMTVLVYLVTKW. Residues 534-555 lie on the Cytoplasmic side of the membrane; it reads RKPQLKTIYDLEKGRYIVTRIR.

Belongs to the GDA1/CD39 NTPase family. Requires Ca(2+) as cofactor. In terms of tissue distribution, detected in mature pollen grains (at the protein level). Also expressed in the veins and hydathode regions of rosette leaves.

The protein resides in the cytoplasmic vesicle membrane. The enzyme catalyses a ribonucleoside 5'-triphosphate + 2 H2O = a ribonucleoside 5'-phosphate + 2 phosphate + 2 H(+). Functionally, catalyzes the hydrolysis of phosphoanhydride bonds of nucleoside tri- and di-phosphates. Involved in the regulation of pollen and anther development. This Arabidopsis thaliana (Mouse-ear cress) protein is Probable apyrase 6 (APY6).